Reading from the N-terminus, the 70-residue chain is Small ribosomal subunit protein bS21 (70 aa).

This sequence belongs to the bacterial ribosomal protein bS21 family.

The polypeptide is Small ribosomal subunit protein bS21 (Cupriavidus pinatubonensis (strain JMP 134 / LMG 1197) (Cupriavidus necator (strain JMP 134))).